A 668-amino-acid polypeptide reads, in one-letter code: Probable metal-nicotianamine transporter YSL5 (668 aa).

Positions 1–11 (MPPPETSSAAA) are enriched in low complexity. The segment at 1–22 (MPPPETSSAAAPSPPSPDPLPP) is disordered. The span at 12 to 22 (PSPPSPDPLPP) shows a compositional bias: pro residues. The next 14 membrane-spanning stretches (helical) occupy residues 27–47 (LTLR…VVIH), 51–71 (LTVG…FFLA), 102–122 (CAIA…IFAM), 147–167 (LGWM…SIVM), 209–229 (LVKY…FSGV), 268–288 (IVNC…WPFI), 315–335 (IAIS…FLII), 383–403 (LAVS…PIIF), 410–430 (LVLV…YGMG), 443–463 (IALF…AGLA), 501–521 (IGVA…WTAF), 557–577 (LEIC…KDVV), 595–615 (FYIG…LFAW), and 633–653 (GLIC…ILGV).

The protein belongs to the YSL (TC 2.A.67.2) family. In terms of tissue distribution, expressed in roots.

The protein localises to the membrane. Functionally, may be involved in the transport of nicotianamine-chelated metals. The chain is Probable metal-nicotianamine transporter YSL5 (YSL5) from Oryza sativa subsp. japonica (Rice).